A 563-amino-acid polypeptide reads, in one-letter code: Heat shock 70 kDa protein 8 (563 aa).

Positions 1 to 25 (MAEAAYTVASDSENTGEEKSSSSPS) are disordered. Alanine 2 carries the N-acetylalanine modification.

The protein belongs to the heat shock protein 70 (TC 1.A.33) family. DnaK subfamily.

Functionally, in cooperation with other chaperones, Hsp70s are key components that facilitate folding of de novo synthesized proteins, assist translocation of precursor proteins into organelles, and are responsible for degradation of damaged protein under stress conditions. In Arabidopsis thaliana (Mouse-ear cress), this protein is Heat shock 70 kDa protein 8 (HSP70-8).